Consider the following 39-residue polypeptide: uncharacterized protein (39 aa).

The segment covering 1–16 (MLNIQPTQSIVNNQPK) has biased composition (polar residues). The disordered stretch occupies residues 1 to 39 (MLNIQPTQSIVNNQPKSDQKKQKPADLLKEFYDKTGNRN). Basic and acidic residues predominate over residues 17 to 39 (SDQKKQKPADLLKEFYDKTGNRN).

This is an uncharacterized protein from Dictyostelium discoideum (Social amoeba).